Reading from the N-terminus, the 588-residue chain is Tetratricopeptide repeat protein 39B (588 aa).

3 TPR repeats span residues 294 to 327, 485 to 518, and 526 to 559; these read SIIL…QQEW, CLVQ…EKRV, and PFTF…YKDY.

Belongs to the TTC39 family.

May be involved in lipid metabolism. The polypeptide is Tetratricopeptide repeat protein 39B (ttc39b) (Xenopus tropicalis (Western clawed frog)).